The following is a 511-amino-acid chain: MLFESFDLVSALATLAACLVSMALLLAVPQQLWQLRWTATRDKSCKLPMPKGSMGFPIIGETCHWFFQGAGFHASRRQKYGNVFKTHLLGRPLIRVTGAENVRKVLMGEHSLVTVDWPQSTSTLLGPNSLANSIGDIHRKRRKIFAKVFSHEALESYLPKIQQVIQETLRVWSSNPDPINVYRESQRLSFNMAVRVLLGFRIPEEEMHCLFSTFQEFVENVFSLPIDLPFSGYRKGIRARDSLQKSIEKAIREKPLHTQGKDYTDALDVLLESAKENNTELTMQELKESTIELIFAAFATTASASTSLVMQLLRHPAVLEKLREELRSCGLLHDGCLCQGELRLDSIISLKYLDCVIKEVLRLFAPVSGGYRIATQTFELDGVQVPKGWSVMYSIRDTHDTSAVFKDVEAFDPDRFSPERSEDREGRFHYLPFGGGVRSCLGKQLATLFLKLLAVELAGGSRFELSTRTFPRMISVPVVHPTDGLRVKFFGLDSNQNQIMAKSDEMLDATV.

Cys440 lines the heme pocket.

This sequence belongs to the cytochrome P450 family. Heme is required as a cofactor.

Its subcellular location is the endoplasmic reticulum membrane. It is found in the microsome membrane. The enzyme catalyses all-trans-retinoate + reduced [NADPH--hemoprotein reductase] + O2 = all-trans-4-hydroxyretinoate + oxidized [NADPH--hemoprotein reductase] + H2O + H(+). It carries out the reaction all-trans-retinoate + reduced [NADPH--hemoprotein reductase] + O2 = all-trans-18-hydroxyretinoate + oxidized [NADPH--hemoprotein reductase] + H2O + H(+). Its function is as follows. A cytochrome P450 monooxygenase involved in the metabolism of retinoates (RAs), the active metabolites of vitamin A, and critical signaling molecules in animals. RAs exist as at least four different isomers: all-trans-RA (atRA), 9-cis-RA, 13-cis-RA, and 9,13-dicis-RA, where atRA is considered to be the biologically active isomer, although 9-cis-RA and 13-cis-RA also have activity. Catalyzes the hydroxylation of atRA primarily at C-4 and C-18, thereby contributing to the regulation of atRA homeostasis and signaling. Hydroxylation of atRA limits its biological activity and initiates a degradative process leading to its eventual elimination. Involved in the convertion of atRA to all-trans-4-oxo-RA. Can oxidize all-trans-13,14-dihydroretinoate (DRA) to metabolites which could include all-trans-4-oxo-DRA, all-trans-4-hydroxy-DRA, all-trans-5,8-epoxy-DRA, and all-trans-18-hydroxy-DRA. Plays a role in skeletal development, both at the level of patterning and in the ossification of bone and the establishment of some synovial joints. The chain is Cytochrome P450 26B1 from Danio rerio (Zebrafish).